Reading from the N-terminus, the 137-residue chain is Small ribosomal subunit protein uS12 (137 aa).

The residue at position 102 (Asp-102) is a 3-methylthioaspartic acid.

The protein belongs to the universal ribosomal protein uS12 family. Part of the 30S ribosomal subunit. Contacts proteins S8 and S17. May interact with IF1 in the 30S initiation complex.

Functionally, with S4 and S5 plays an important role in translational accuracy. In terms of biological role, interacts with and stabilizes bases of the 16S rRNA that are involved in tRNA selection in the A site and with the mRNA backbone. Located at the interface of the 30S and 50S subunits, it traverses the body of the 30S subunit contacting proteins on the other side and probably holding the rRNA structure together. The combined cluster of proteins S8, S12 and S17 appears to hold together the shoulder and platform of the 30S subunit. The polypeptide is Small ribosomal subunit protein uS12 (Phytoplasma mali (strain AT)).